Reading from the N-terminus, the 90-residue chain is DNA-directed RNA polymerase subunit omega (90 aa).

Residues 69-90 form a disordered region; sequence RQEQQEQDAAELAAVSSITHNR.

Belongs to the RNA polymerase subunit omega family. The RNAP catalytic core consists of 2 alpha, 1 beta, 1 beta' and 1 omega subunit. When a sigma factor is associated with the core the holoenzyme is formed, which can initiate transcription.

The catalysed reaction is RNA(n) + a ribonucleoside 5'-triphosphate = RNA(n+1) + diphosphate. In terms of biological role, promotes RNA polymerase assembly. Latches the N- and C-terminal regions of the beta' subunit thereby facilitating its interaction with the beta and alpha subunits. This is DNA-directed RNA polymerase subunit omega from Aliivibrio fischeri (strain ATCC 700601 / ES114) (Vibrio fischeri).